We begin with the raw amino-acid sequence, 243 residues long: MGNKINPTGFRLGITQEHRSKWFATSKTYPTLLQEDDKIRTFIQKKYSSAGISDVLIARKADQLELELKTARPGVIVGRQGSGIEELRSGIQKTIGDRTRQVRINVVEVERVDADAYLLAEYIAQQLEKRVAFRRTIRMALQRAQRAGVLGLKVQVGGRLNGAEIARTEWTREGRVPLHTLRAEVDYALREANTTYGVLGIKVWVFKGEVLPKEEQTIPVGAIPRRKGSRKPQQFEDRSNENS.

Residues isoleucine 39–glutamate 110 enclose the KH type-2 domain. Residues glycine 221–serine 243 form a disordered region. The segment covering glutamine 233–serine 243 has biased composition (basic and acidic residues).

The protein belongs to the universal ribosomal protein uS3 family. Part of the 30S ribosomal subunit. Forms a tight complex with proteins S10 and S14.

In terms of biological role, binds the lower part of the 30S subunit head. Binds mRNA in the 70S ribosome, positioning it for translation. This is Small ribosomal subunit protein uS3 from Prochlorococcus marinus subsp. pastoris (strain CCMP1986 / NIES-2087 / MED4).